The primary structure comprises 113 residues: uncharacterized protein (113 aa).

The chain crosses the membrane as a helical span at residues 4-26 (VLFKIAVALLYLLSFFLHRLHLR). The disordered stretch occupies residues 32–74 (RRRRRRHHRRHHRRHHHHRRRRRRRRRRRRRHHRHHHHRHRRR).

It localises to the membrane. This is an uncharacterized protein from Saccharomyces cerevisiae (strain ATCC 204508 / S288c) (Baker's yeast).